Here is a 293-residue protein sequence, read N- to C-terminus: Ribosomal protein L11 methyltransferase (293 aa).

S-adenosyl-L-methionine-binding residues include Thr-145, Gly-166, Asp-188, and Asn-230.

The protein belongs to the methyltransferase superfamily. PrmA family.

It is found in the cytoplasm. The catalysed reaction is L-lysyl-[protein] + 3 S-adenosyl-L-methionine = N(6),N(6),N(6)-trimethyl-L-lysyl-[protein] + 3 S-adenosyl-L-homocysteine + 3 H(+). Functionally, methylates ribosomal protein L11. The protein is Ribosomal protein L11 methyltransferase of Shewanella baltica (strain OS195).